Consider the following 879-residue polypeptide: Leucine--tRNA ligase (879 aa).

A 'HIGH' region motif is present at residues 45–55; sequence PYPSGALHMGH. Residues 637–641 carry the 'KMSKS' region motif; that stretch reads KMSKS. Lys640 is a binding site for ATP.

Belongs to the class-I aminoacyl-tRNA synthetase family.

The protein resides in the cytoplasm. It catalyses the reaction tRNA(Leu) + L-leucine + ATP = L-leucyl-tRNA(Leu) + AMP + diphosphate. This Xylella fastidiosa (strain M12) protein is Leucine--tRNA ligase.